We begin with the raw amino-acid sequence, 185 residues long: Ribosome-recycling factor (185 aa).

The protein belongs to the RRF family.

It is found in the cytoplasm. Functionally, responsible for the release of ribosomes from messenger RNA at the termination of protein biosynthesis. May increase the efficiency of translation by recycling ribosomes from one round of translation to another. This Rhodococcus erythropolis (strain PR4 / NBRC 100887) protein is Ribosome-recycling factor.